The chain runs to 96 residues: MTATFNPQANTVFCRKYQQDLPKMPHPPFPNKKGQELQETVSEKAWKEWLEQQTMLINENHLSMLDPKAKQFLTEQRDKFLDNEDYERAQGWTPES.

The tract at residues 21 to 40 (LPKMPHPPFPNKKGQELQET) is disordered.

Belongs to the Fe(2+)-trafficking protein family.

Could be a mediator in iron transactions between iron acquisition and iron-requiring processes, such as synthesis and/or repair of Fe-S clusters in biosynthetic enzymes. In Psychrobacter arcticus (strain DSM 17307 / VKM B-2377 / 273-4), this protein is Probable Fe(2+)-trafficking protein.